The following is a 508-amino-acid chain: GATA zinc finger domain-containing protein 13 (508 aa).

Disordered stretches follow at residues 20 to 51 (YSKN…INNN) and 203 to 296 (MSII…PEIE). The segment covering 23–51 (NNNNNNNNNNNNNINNNNNNNNNNNINNN) has biased composition (low complexity). A compositionally biased stretch (polar residues) spans 203–224 (MSIIPSDNFPTPQLPLETNTDL). The span at 225-247 (NNTSDCSSTTFSSPPSSAFNSPN) shows a compositional bias: low complexity. A compositionally biased stretch (polar residues) spans 248–266 (LQNDYTQPQNQKSQSSTIV). Positions 269–279 (NSSKSKSKNNK) are enriched in basic residues. A GATA-type zinc finger spans residues 327–354 (CSICKIKCSIYWRRILINEVRTSVCNAC). A coiled-coil region spans residues 356-433 (LRTMKKTKKE…NNNNNNNNNN (78 aa)). The span at 399–482 (TTTTTTTTTS…NNNNNDNYND (84 aa)) shows a compositional bias: low complexity. The tract at residues 399–484 (TTTTTTTTTS…NNNDNYNDSI (86 aa)) is disordered.

This is GATA zinc finger domain-containing protein 13 (gtaM) from Dictyostelium discoideum (Social amoeba).